Consider the following 416-residue polypeptide: Keratin, type I cuticular Ha1 (416 aa).

Residues methionine 1–glutamate 56 are head. Positions glutamate 56–leucine 367 constitute an IF rod domain. The coil 1A stretch occupies residues lysine 57–arginine 91. The linker 1 stretch occupies residues serine 92–serine 102. The segment at tyrosine 103–cysteine 203 is coil 1B. The interval glutamine 204–valine 219 is linker 12. Positions aspartate 220 to glutamate 363 are coil 2. The tail stretch occupies residues aspartate 364–arginine 416.

Belongs to the intermediate filament family.

This chain is Keratin, type I cuticular Ha1 (KRT31), found in Pan troglodytes (Chimpanzee).